A 541-amino-acid chain; its full sequence is Nif-specific regulatory protein (541 aa).

The GAF domain maps to 23–158 (RLETTLNNFV…MAANLAGRAI (136 aa)). Positions 170–191 (TFAEEQQEQQNSRDEQSQSSAR) are disordered. The Sigma-54 factor interaction domain maps to 200–428 (IIGESTALMT…LENCVRRTAT (229 aa)). Residues 228–235 (GETGTGKE) and 291–300 (ANGGTLLLDE) each bind ATP. Residues 429-498 (LARSKTITSS…SAGVASNLIE (70 aa)) form an inter-domain linker region. A divalent metal cation is bound by residues Cys-442 and Cys-447. The segment at 499–541 (RDRLISALEEAGWNQAKAARILEKTPRQVGYALRRHGVDVRKL) is C-terminal DNA-binding domain. The segment at residues 513–532 (QAKAARILEKTPRQVGYALR) is a DNA-binding region (H-T-H motif).

Interacts with sigma-54.

Its function is as follows. Required for activation of most nif operons, which are directly involved in nitrogen fixation. The chain is Nif-specific regulatory protein (nifA) from Rhizobium meliloti (strain 1021) (Ensifer meliloti).